The sequence spans 490 residues: Betaine aldehyde dehydrogenase (490 aa).

2 residues coordinate K(+): Thr26 and Asp93. 150 to 152 provides a ligand contact to NAD(+); sequence GAW. Lys162 serves as the catalytic Charge relay system. NAD(+) is bound at residue 176-179; sequence KPSE. Val180 lines the K(+) pocket. Residue 230 to 233 coordinates NAD(+); sequence GVAT. Leu246 contacts K(+). Residue Glu252 is the Proton acceptor of the active site. NAD(+) is bound by residues Gly254, Cys286, and Glu387. Cys286 (nucleophile) is an active-site residue. A Cysteine sulfenic acid (-SOH) modification is found at Cys286. Residues Lys457 and Gly460 each contribute to the K(+) site. The Charge relay system role is filled by Glu464.

Belongs to the aldehyde dehydrogenase family. Dimer of dimers. The cofactor is K(+).

The catalysed reaction is betaine aldehyde + NAD(+) + H2O = glycine betaine + NADH + 2 H(+). The protein operates within amine and polyamine biosynthesis; betaine biosynthesis via choline pathway; betaine from betaine aldehyde: step 1/1. In terms of biological role, involved in the biosynthesis of the osmoprotectant glycine betaine. Catalyzes the irreversible oxidation of betaine aldehyde to the corresponding acid. This Stenotrophomonas maltophilia (strain R551-3) protein is Betaine aldehyde dehydrogenase.